Here is a 96-residue protein sequence, read N- to C-terminus: DNA-directed RNA polymerase subunit Rpo11 (96 aa).

This sequence belongs to the archaeal Rpo11/eukaryotic RPB11/RPC19 RNA polymerase subunit family. Part of the RNA polymerase complex.

It is found in the cytoplasm. The catalysed reaction is RNA(n) + a ribonucleoside 5'-triphosphate = RNA(n+1) + diphosphate. Its function is as follows. DNA-dependent RNA polymerase (RNAP) catalyzes the transcription of DNA into RNA using the four ribonucleoside triphosphates as substrates. This chain is DNA-directed RNA polymerase subunit Rpo11, found in Methanococcus maripaludis (strain C6 / ATCC BAA-1332).